We begin with the raw amino-acid sequence, 788 residues long: Protein translocase subunit SecA (788 aa).

Residues glutamine 85, 103–107 (GEGKT), and aspartate 494 each bind ATP.

This sequence belongs to the SecA family. As to quaternary structure, monomer and homodimer. Part of the essential Sec protein translocation apparatus which comprises SecA, SecYEG and auxiliary proteins SecDF. Other proteins may also be involved.

The protein localises to the cell membrane. It is found in the cytoplasm. It carries out the reaction ATP + H2O + cellular proteinSide 1 = ADP + phosphate + cellular proteinSide 2.. In terms of biological role, part of the Sec protein translocase complex. Interacts with the SecYEG preprotein conducting channel. Has a central role in coupling the hydrolysis of ATP to the transfer of proteins into and across the cell membrane, serving as an ATP-driven molecular motor driving the stepwise translocation of polypeptide chains across the membrane. The protein is Protein translocase subunit SecA of Oenococcus oeni (strain ATCC BAA-331 / PSU-1).